Consider the following 493-residue polypeptide: Putative trans-acting regulator SP_1800 (493 aa).

The protein belongs to the AtxA/AcpA family.

The protein is Putative trans-acting regulator SP_1800 of Streptococcus pneumoniae serotype 4 (strain ATCC BAA-334 / TIGR4).